The following is a 610-amino-acid chain: MNHHLIITPIFHLQIMLPVATLKRPPPPAATCSIYSFSRGTPSLVSKARLSTAAVGGMKNEPSPNHYSDISSSDLNLTRRSGNYGPTMWDFEYIQSIHNDYTEKKYMNRLNKLKEEMKKMIMAEGSQELEKLELIDNLQRLGVSYHFKHEIMQILSSIKQHSTPADSLYATALKFRLFREYGFHISQEIFGGLSETHTEDTKGMLYLYEASFLATEGESELEKARNWTEKHLREYLENKNDDQNVAELVHHALELPLHWRMLRIEARWFINFYKKKQDMIPLLLELAILDFNIVQAAHIEDLKYVARWWKETCLAENLPFARDRLVENFFWTIGVNFLPQYGYFRRIETKVNALVTTIDDVYDVFGTMDELQCFTHAFQRWNIDELDNLPDNMKMCYFALDNFINEVAGDAFEEHRVPILSYLRNAWTDLCKAYLREAKWYFSKYIPTMEEYMDNAWISISAPVILVHAYFLVANPVNKEVLHYLENYHDIIRWSALILRLANDLGTSSEELKRGDVPKSIQCYMNEKKVSEEEARQHIRLLISETWKKLNEAHNVAAHPFPKMFVKCAMNLARMAQCMYQHGDGHGHGDLNSETTNHIMALLFESIPPA.

Residues 1 to 51 constitute a chloroplast transit peptide; sequence MNHHLIITPIFHLQIMLPVATLKRPPPPAATCSIYSFSRGTPSLVSKARLS. Residues R322, D359, D363, R500, and N503 each contribute to the (2E)-geranyl diphosphate site. Mg(2+) is bound by residues D359 and D363. Residues 359–363 carry the DDXXD motif motif; the sequence is DDVYD. N503, T507, and E511 together coordinate Mg(2+).

Belongs to the terpene synthase family. Tpsb subfamily. Monomer. Mg(2+) is required as a cofactor. The cofactor is Mn(2+). Confined to buds and flowers.

The protein resides in the plastid. Its subcellular location is the chloroplast. It catalyses the reaction (2E)-geranyl diphosphate + H2O = 1,8-cineole + diphosphate. It carries out the reaction (2E)-geranyl diphosphate = limonene + diphosphate. The catalysed reaction is (2E)-geranyl diphosphate = sabinene + diphosphate. The enzyme catalyses (2E)-geranyl diphosphate = (E)-beta-ocimene + diphosphate. It catalyses the reaction (2E)-geranyl diphosphate = beta-myrcene + diphosphate. It carries out the reaction (2E)-geranyl diphosphate = alpha-pinene + diphosphate. The catalysed reaction is (2E)-geranyl diphosphate + H2O = (S)-alpha-terpineol + diphosphate. It functions in the pathway secondary metabolite biosynthesis; terpenoid biosynthesis. In terms of biological role, monoterpene synthase involved in the biosynthesis of monoterpene natural products of the 'cineole cassette', volatile compounds present in floral scent. Catalyzes the conversion of (2E)-geranyl diphosphate (GPP) into 1,8-cineole and, as minor products, limonene, sabinene, (E)-beta-ocimene, beta-myrcene, alpha-pinene and alpha-terpineol. The polypeptide is 1,8-cineol synthase, chloroplastic (Nicotiana suaveolens (Australian tobacco)).